Reading from the N-terminus, the 117-residue chain is MKKNTHPQYQKVLFIDSASGHRFVCGSTLKPDATEKFEGVEYPVSYLSISSSSHPFFTGSKQLVDSEGRVEKFKKRFERKKEASPADTPPESDSTTENASVEKKAEKKRVTAKGSKK.

Positions 75–117 are disordered; sequence KRFERKKEASPADTPPESDSTTENASVEKKAEKKRVTAKGSKK. The span at 100–109 shows a compositional bias: basic and acidic residues; sequence SVEKKAEKKR.

Belongs to the bacterial ribosomal protein bL31 family. Type B subfamily. In terms of assembly, part of the 50S ribosomal subunit.

The protein is Large ribosomal subunit protein bL31B of Protochlamydia amoebophila (strain UWE25).